A 238-amino-acid chain; its full sequence is Dolichyldiphosphatase 1 (238 aa).

Helical transmembrane passes span 33 to 53, 100 to 120, 130 to 150, and 162 to 182; these read LAYLSLGPVFVIVGFVTLIIF, PSSHSQFMWFFSVYSFLFLYL, FLDLLWRHVLSLGLLAAAFLV, and WSQVLYGGIAGGLMAVAWFIF.

Belongs to the dolichyldiphosphatase family.

The protein localises to the endoplasmic reticulum membrane. It catalyses the reaction a di-trans,poly-cis-dolichyl diphosphate + H2O = a di-trans,poly-cis-dolichyl phosphate + phosphate + H(+). Its pathway is protein modification; protein glycosylation. Required for efficient N-glycosylation. Necessary for maintaining optimal levels of dolichol-linked oligosaccharides. Hydrolyzes dolichyl pyrophosphate at a very high rate and dolichyl monophosphate at a much lower rate. Does not act on phosphatidate. In Plecturocebus moloch (Dusky titi monkey), this protein is Dolichyldiphosphatase 1 (DOLPP1).